Here is a 434-residue protein sequence, read N- to C-terminus: CCA tRNA nucleotidyltransferase 1, mitochondrial (434 aa).

Residues 1 to 41 (MQSVLYPWHRQVLRCSWSRLCLLKRYLFTMKLQSPEFQSLF) constitute a mitochondrion transit peptide. ATP-binding residues include glycine 64 and arginine 67. CTP contacts are provided by glycine 64 and arginine 67. Mg(2+) is bound by residues aspartate 77 and aspartate 79. ATP-binding residues include arginine 151, aspartate 194, arginine 197, arginine 200, and arginine 203. CTP is bound by residues arginine 151, aspartate 194, arginine 197, arginine 200, and arginine 203. The residue at position 400 (serine 400) is a Phosphoserine. Lysine 402 carries the N6-acetyllysine modification.

Belongs to the tRNA nucleotidyltransferase/poly(A) polymerase family. In terms of assembly, monomer, and homodimer. It depends on Mg(2+) as a cofactor.

It is found in the mitochondrion. Its subcellular location is the cytoplasm. The protein localises to the nucleus. It carries out the reaction a tRNA precursor + 2 CTP + ATP = a tRNA with a 3' CCA end + 3 diphosphate. It catalyses the reaction a tRNA with a 3' CCA end + 2 CTP + ATP = a tRNA with a 3' CCACCA end + 3 diphosphate. Nucleotidyltransferase that catalyzes the addition and repair of the essential 3'-terminal CCA sequence in tRNAs, which is necessary for the attachment of amino acids to the 3' terminus of tRNA molecules, using CTP and ATP as substrates. tRNA 3'-terminal CCA addition is required both for tRNA processing and repair. Promotes tRNA repair and recycling downstream of the ribosome-associated quality control (RQC) pathway by mediating addition of the tRNA 3'-terminal CCA following cleavage by ANKZF1 and repair by ELAC1. Also involved in tRNA surveillance by mediating tandem CCA addition to generate a CCACCA at the 3' terminus of unstable tRNAs and tRNA-like transcripts. While stable tRNAs receive only 3'-terminal CCA, unstable tRNAs beginning with GG are marked with CCACCA and rapidly degraded. The structural flexibility of RNA controls the choice between CCA versus CCACCA addition: following the first CCA addition cycle, nucleotide-binding to the active site triggers a clockwise screw motion, producing torque on the RNA. This ejects stable RNAs, whereas unstable RNAs are refolded while bound to the enzyme and subjected to a second CCA catalytic cycle. This is CCA tRNA nucleotidyltransferase 1, mitochondrial (Trnt1) from Mus musculus (Mouse).